Here is a 206-residue protein sequence, read N- to C-terminus: Methylthioribulose-1-phosphate dehydratase (206 aa).

Zn(2+)-binding residues include His-96 and His-98.

This sequence belongs to the aldolase class II family. MtnB subfamily. Zn(2+) is required as a cofactor.

It catalyses the reaction 5-(methylsulfanyl)-D-ribulose 1-phosphate = 5-methylsulfanyl-2,3-dioxopentyl phosphate + H2O. It participates in amino-acid biosynthesis; L-methionine biosynthesis via salvage pathway; L-methionine from S-methyl-5-thio-alpha-D-ribose 1-phosphate: step 2/6. Catalyzes the dehydration of methylthioribulose-1-phosphate (MTRu-1-P) into 2,3-diketo-5-methylthiopentyl-1-phosphate (DK-MTP-1-P). The protein is Methylthioribulose-1-phosphate dehydratase of Exiguobacterium sibiricum (strain DSM 17290 / CCUG 55495 / CIP 109462 / JCM 13490 / 255-15).